We begin with the raw amino-acid sequence, 99 residues long: Probable small ribosomal subunit protein cS23 (99 aa).

This sequence belongs to the chloroplast-specific ribosomal protein cS23 family. In terms of assembly, part of the 30S ribosomal subunit.

Its function is as follows. Probably a ribosomal protein or a ribosome-associated protein. The chain is Probable small ribosomal subunit protein cS23 from Synechococcus sp. (strain JA-3-3Ab) (Cyanobacteria bacterium Yellowstone A-Prime).